Here is a 627-residue protein sequence, read N- to C-terminus: Carnitine O-acetyltransferase (627 aa).

Positions 1–30 are excised as a propeptide; the sequence is MDRKQKQAEKARPYGLLKPAALGKIPGRFQ. Lys-94 is subject to N6-succinyllysine. Lys-262 is modified (N6-acetyllysine; alternate). Residue Lys-262 is modified to N6-succinyllysine; alternate. Residue Lys-269 is modified to N6-acetyllysine. His-344 acts as the Proton acceptor in catalysis. CoA is bound by residues Lys-420 and 424–431; that span reads KSEKISPD. (R)-carnitine contacts are provided by Tyr-453 and Ser-455. Position 457 (Ser-457) interacts with CoA. Thr-466 is a binding site for (R)-carnitine. Gln-556 is a binding site for CoA. A Microbody targeting signal motif is present at residues 625-627; sequence SKL.

It belongs to the carnitine/choline acetyltransferase family. As to quaternary structure, monomer.

Its subcellular location is the endoplasmic reticulum. It localises to the peroxisome. It is found in the mitochondrion inner membrane. The catalysed reaction is (R)-carnitine + acetyl-CoA = O-acetyl-(R)-carnitine + CoA. It catalyses the reaction propanoyl-CoA + (R)-carnitine = O-propanoyl-(R)-carnitine + CoA. It carries out the reaction butanoyl-CoA + (R)-carnitine = O-butanoyl-(R)-carnitine + CoA. The enzyme catalyses hexanoyl-CoA + (R)-carnitine = O-hexanoyl-(R)-carnitine + CoA. The catalysed reaction is octanoyl-CoA + (R)-carnitine = O-octanoyl-(R)-carnitine + CoA. It catalyses the reaction decanoyl-CoA + (R)-carnitine = O-decanoyl-(R)-carnitine + CoA. It carries out the reaction 3-methylbutanoyl-CoA + (R)-carnitine = O-3-methylbutanoyl-(R)-carnitine + CoA. The enzyme catalyses 2-methylpropanoyl-CoA + (R)-carnitine = O-isobutanoyl-(R)-carnitine + CoA. The catalysed reaction is 2-methylbutanoyl-CoA + (R)-carnitine = O-2-methylbutanoyl-(R)-carnitine + CoA. It catalyses the reaction acetoacetyl-CoA + (R)-carnitine = O-3-oxobutanoyl-(R)-carnitine + CoA. It carries out the reaction 3-hydroxybutanoyl-CoA + (R)-carnitine = O-3-hydroxybutanoyl-(R)-carnitine + CoA. The enzyme catalyses 4,8-dimethylnonanoyl-CoA + (R)-carnitine = O-4,8-dimethylnonanoyl-(R)-carnitine + CoA. The catalysed reaction is 2,6-dimethylheptanoyl-CoA + (R)-carnitine = O-2,6-dimethylheptanoyl-(R)-carnitine + CoA. In terms of biological role, catalyzes the reversible transfer of acyl groups from carnitine to coenzyme A (CoA) and regulates the acyl-CoA/CoA ratio. Also plays a crucial role in the transport of fatty acids for beta-oxidation. Responsible for the synthesis of short- and branched-chain acylcarnitines. Active towards some branched-chain amino acid oxidation pathway (BCAAO) intermediates. Trans-2-enoyl-CoAs and 2-methylacyl-CoAs are poor substrates. This is Carnitine O-acetyltransferase (CRAT) from Columba livia (Rock dove).